A 160-amino-acid polypeptide reads, in one-letter code: Nucleotide-binding protein CbuK_1936 (160 aa).

Belongs to the YajQ family.

Functionally, nucleotide-binding protein. The chain is Nucleotide-binding protein CbuK_1936 from Coxiella burnetii (strain CbuK_Q154) (Coxiella burnetii (strain Q154)).